Consider the following 349-residue polypeptide: T-cell immunoglobulin and mucin domain-containing protein 2 (349 aa).

The N-terminal stretch at 1-20 is a signal peptide; sequence MVQLQVFISGLLLLLPGAVA. Residues 21 to 275 lie on the Extracellular side of the membrane; it reads SYTVVQGHSV…QKLQRNPTKG (255 aa). An Ig-like V-type domain is found at 22 to 123; that stretch reads YTVVQGHSVT…AFYFVDYLLE (102 aa). Intrachain disulfides connect C34–C107, C48–C59, and C54–C106. 2 N-linked (GlcNAc...) asparagine glycosylation sites follow: N84 and N89. A disordered region spans residues 128-271; sequence LPTSPPTRPT…AIPPQKLQRN (144 aa). A compositionally biased stretch (low complexity) spans 136 to 215; that stretch reads PTNTGRPTTT…TSTPPTPEQT (80 aa). The segment covering 222 to 260 has biased composition (polar residues); it reads ATTYYPDQTTAEVTEAPSHTPTDWNNTATSSDDSWNSDT. The helical transmembrane segment at 276-296 threads the bilayer; sequence FYVGMSFAALLLLLLASTVAI. Residues 297–349 lie on the Cytoplasmic side of the membrane; that stretch reads TRYMVMRKNSGSLRFVAFPVSKIGASQNKVVEQARIEDEVYIIEDSPYFEEES.

This sequence belongs to the immunoglobulin superfamily. TIM family. As to quaternary structure, homodimer.

It is found in the cell membrane. In terms of biological role, probable receptor for SEMA4A involved in the regulation of T-cell function. The interaction with SEMA4A enhances T-cell activation. This is T-cell immunoglobulin and mucin domain-containing protein 2 (Timd2) from Rattus norvegicus (Rat).